The following is a 153-amino-acid chain: D-aminoacyl-tRNA deacylase (153 aa).

The short motif at 137-138 (GP) is the Gly-cisPro motif, important for rejection of L-amino acids element.

Belongs to the DTD family. Homodimer.

It localises to the cytoplasm. It carries out the reaction glycyl-tRNA(Ala) + H2O = tRNA(Ala) + glycine + H(+). It catalyses the reaction a D-aminoacyl-tRNA + H2O = a tRNA + a D-alpha-amino acid + H(+). Its function is as follows. An aminoacyl-tRNA editing enzyme that deacylates mischarged D-aminoacyl-tRNAs. Also deacylates mischarged glycyl-tRNA(Ala), protecting cells against glycine mischarging by AlaRS. Acts via tRNA-based rather than protein-based catalysis; rejects L-amino acids rather than detecting D-amino acids in the active site. By recycling D-aminoacyl-tRNA to D-amino acids and free tRNA molecules, this enzyme counteracts the toxicity associated with the formation of D-aminoacyl-tRNA entities in vivo and helps enforce protein L-homochirality. This Myxococcus xanthus (strain DK1622) protein is D-aminoacyl-tRNA deacylase.